The sequence spans 94 residues: MSARCQITGRTVGFGKAVSHSHRRTRRRWPPNIQLKAYYLPSEDRRIKVRVSAQGIKVIDRDGHRGRRRAARAGSAPAHFARQAGSSLRTAAIL.

Residues 63–94 (GHRGRRRAARAGSAPAHFARQAGSSLRTAAIL) are disordered. Low complexity predominate over residues 72–82 (RAGSAPAHFAR). The segment covering 84–94 (AGSSLRTAAIL) has biased composition (polar residues).

This sequence belongs to the bacterial ribosomal protein bL28 family.

This Mycobacterium bovis (strain ATCC BAA-935 / AF2122/97) protein is Large ribosomal subunit protein bL28A (rpmB1).